Consider the following 296-residue polypeptide: Diaminopimelate epimerase (296 aa).

N11 and N78 together coordinate substrate. C87 functions as the Proton donor in the catalytic mechanism. Residues 88 to 89 (GN), N167, N203, and 221 to 222 (ER) each bind substrate. Residue C230 is the Proton acceptor of the active site. 231–232 (GT) serves as a coordination point for substrate.

The protein belongs to the diaminopimelate epimerase family. As to quaternary structure, homodimer.

Its subcellular location is the cytoplasm. It catalyses the reaction (2S,6S)-2,6-diaminopimelate = meso-2,6-diaminopimelate. The protein operates within amino-acid biosynthesis; L-lysine biosynthesis via DAP pathway; DL-2,6-diaminopimelate from LL-2,6-diaminopimelate: step 1/1. Its function is as follows. Catalyzes the stereoinversion of LL-2,6-diaminopimelate (L,L-DAP) to meso-diaminopimelate (meso-DAP), a precursor of L-lysine and an essential component of the bacterial peptidoglycan. The sequence is that of Diaminopimelate epimerase from Mycobacterium leprae (strain Br4923).